The sequence spans 253 residues: ER membrane protein complex subunit 3 (253 aa).

Helical transmembrane passes span 10 to 30 (WVLLPISIVMVLTGVLKQYIM), 126 to 146 (FIPQTIIMWWVNHFFAGFILM), and 176 to 196 (SISWYFISVLGLNPVYNLIGL).

Belongs to the EMC3 family. In terms of assembly, component of the ER membrane protein complex (EMC), which is composed of EMC1, EMC2, EMC3, EMC4, EMC5 and EMC6.

The protein localises to the endoplasmic reticulum membrane. The EMC seems to be required for efficient folding of proteins in the endoplasmic reticulum (ER). This is ER membrane protein complex subunit 3 (AIM27) from Saccharomyces cerevisiae (strain YJM789) (Baker's yeast).